The primary structure comprises 334 residues: Leucine-rich repeat-containing protein 39 (334 aa).

A coiled-coil region spans residues 10 to 47; the sequence is AVNAVKEVWEKRIKKLNEDLKREKEFQQKLVRIWEERV. 9 LRR repeats span residues 84-105, 107-128, 130-151, 153-176, 177-198, 200-221, 223-244, 246-267, and 269-290; these read QLQEWQLHRIGLLKIPEFIGRF, NLIVLDLSRNTITEIPRGIGLL, RLQELILSYNRIKTVPMELSYC, SLEKLELAVNRDISDLPQELSNLL, KLTHLDLSMNLFTTIPPAVLNM, ALEWLDMGSNRLEQLPDTIERM, NLHTLWLQRNEITCLPETISSM, NLSTLVLSNNKLQDIPVCMEKM, and NLRFVNFRDNPLKLEVTLPPSE.

In terms of assembly, interacts with MYH7 (via C-terminus).

It is found in the cytoplasm. Its subcellular location is the myofibril. It localises to the sarcomere. The protein localises to the m line. Functionally, component of the sarcomeric M-band which plays a role in myocyte response to biomechanical stress. May regulate expression of other M-band proteins via an SRF-dependent pathway. Important for normal contractile function in heart. The protein is Leucine-rich repeat-containing protein 39 of Bos taurus (Bovine).